The sequence spans 313 residues: Glutaminase (313 aa).

7 residues coordinate substrate: S64, N116, E163, N170, Y194, Y246, and V264.

Belongs to the glutaminase family. Homotetramer.

It carries out the reaction L-glutamine + H2O = L-glutamate + NH4(+). In Exiguobacterium sp. (strain ATCC BAA-1283 / AT1b), this protein is Glutaminase.